The primary structure comprises 24 residues: VRDAYIAQNYNCVYTCFKNDYCND.

Residues 2–24 (RDAYIAQNYNCVYTCFKNDYCND) enclose the LCN-type CS-alpha/beta domain.

Belongs to the long (4 C-C) scorpion toxin superfamily. Sodium channel inhibitor family. Alpha subfamily. Expressed by the venom gland.

The protein resides in the secreted. Its function is as follows. Binds to sodium channels (Nav) and inhibits the inactivation of the activated channels, thereby blocking neuronal transmission. This is Neurotoxin 5 from Buthus occitanus tunetanus (Common European scorpion).